The following is a 406-amino-acid chain: Acetamidase (406 aa).

Residues 387–399 (CRPRSSTSTSPRR) show a composition bias toward low complexity. Residues 387-406 (CRPRSSTSTSPRRQGPAEGR) are disordered.

This sequence belongs to the acetamidase/formamidase family.

The catalysed reaction is a monocarboxylic acid amide + H2O = a monocarboxylate + NH4(+). It carries out the reaction acetamide + H2O = acetate + NH4(+). Allows acetamide to be used as a sole carbon or nitrogen source. The chain is Acetamidase (amdA) from Mycolicibacterium smegmatis (Mycobacterium smegmatis).